The sequence spans 515 residues: mRNA export factor ICP27 homolog (515 aa).

Zn(2+) contacts are provided by Cys230, His335, Cys337, and Cys342. The CHC2-type zinc finger occupies 230 to 342; sequence CVFNDNGHGD…SNHKCDDVSC (113 aa). The segment covering 398–408 has biased composition (polar residues); the sequence is YSTNHDLPQTS. The tract at residues 398 to 422 is disordered; that stretch reads YSTNHDLPQTSHRSHKNHGTPKVKS. Positions 409–422 are enriched in basic residues; it reads HRSHKNHGTPKVKS.

Belongs to the HHV-1 ICP27 protein family.

The protein resides in the virion tegument. It localises to the virion. The protein localises to the host nucleus. It is found in the host cytoplasm. Its function is as follows. Immediate early (EI) protein that plays many roles during productive infection including regulation of viral gene expression and nuclear export of intronless viral RNAs. In Human herpesvirus 6A (strain Uganda-1102) (HHV-6 variant A), this protein is mRNA export factor ICP27 homolog.